The sequence spans 581 residues: Leucine-rich repeat-containing protein 47 (581 aa).

LRR repeat units follow at residues 78 to 97 (QLHSLVLRRNALGPGLSPEL), 102 to 123 (ALRVLDLSGNALETLPPGEGLG), 132 to 154 (QLQSLNLSGNRLRELPADLARCA), 156 to 177 (RLQSLNLTGNRLDAFPPELFRP), 182 to 204 (LLSELAAADNCLRELSPDIAHLA), 205 to 227 (SLKTLDLSNNQLTEIPAELADCP), and 228 to 248 (KLKEINFRGNRLRDKRLEKMV). The disordered stretch occupies residues 262 to 301 (AGGRGGRSKGRQEASEKEDRKKRRERKQHRESGEGEEEVA). Residues 271-280 (GRQEASEKED) are compositionally biased toward basic and acidic residues. Serine 314, serine 430, and serine 519 each carry phosphoserine. Positions 401–436 (LGRKEAKAKELVRQLQLEAEEQRKQKKRQSVSGLHR) form a coiled coil.

The sequence is that of Leucine-rich repeat-containing protein 47 (Lrrc47) from Mus musculus (Mouse).